The sequence spans 409 residues: Dual-specificity RNA methyltransferase RlmN (409 aa).

Glu-121 serves as the catalytic Proton acceptor. Residues 127–376 (EEGRGTLCIS…IRTPRGRDIL (250 aa)) form the Radical SAM core domain. Cys-134 and Cys-379 are oxidised to a cystine. Cys-141, Cys-145, and Cys-148 together coordinate [4Fe-4S] cluster. S-adenosyl-L-methionine-binding positions include 205-206 (GE), Ser-237, 259-261 (SLH), and Asn-336. Cys-379 (S-methylcysteine intermediate) is an active-site residue.

It belongs to the radical SAM superfamily. RlmN family. [4Fe-4S] cluster is required as a cofactor.

It is found in the cytoplasm. It catalyses the reaction adenosine(2503) in 23S rRNA + 2 reduced [2Fe-2S]-[ferredoxin] + 2 S-adenosyl-L-methionine = 2-methyladenosine(2503) in 23S rRNA + 5'-deoxyadenosine + L-methionine + 2 oxidized [2Fe-2S]-[ferredoxin] + S-adenosyl-L-homocysteine. The enzyme catalyses adenosine(37) in tRNA + 2 reduced [2Fe-2S]-[ferredoxin] + 2 S-adenosyl-L-methionine = 2-methyladenosine(37) in tRNA + 5'-deoxyadenosine + L-methionine + 2 oxidized [2Fe-2S]-[ferredoxin] + S-adenosyl-L-homocysteine. Functionally, specifically methylates position 2 of adenine 2503 in 23S rRNA and position 2 of adenine 37 in tRNAs. m2A2503 modification seems to play a crucial role in the proofreading step occurring at the peptidyl transferase center and thus would serve to optimize ribosomal fidelity. The chain is Dual-specificity RNA methyltransferase RlmN from Agrobacterium fabrum (strain C58 / ATCC 33970) (Agrobacterium tumefaciens (strain C58)).